Here is a 205-residue protein sequence, read N- to C-terminus: GTP-binding protein yptV5 (205 aa).

Gly-15–Thr-22 lines the GTP pocket. The short motif at Tyr-37–Phe-45 is the Effector region element. Residues Asp-63 to Gln-67 and Asn-125 to Asp-128 each bind GTP. Residues Cys-204 and Cys-205 are each lipidated (S-geranylgeranyl cysteine).

The protein belongs to the small GTPase superfamily. Rab family.

The protein resides in the cell membrane. Functionally, protein transport. Probably involved in vesicular traffic. The protein is GTP-binding protein yptV5 (YPTV5) of Volvox carteri (Green alga).